Here is a 153-residue protein sequence, read N- to C-terminus: Ribosome maturation factor RimP (153 aa).

Belongs to the RimP family.

Its subcellular location is the cytoplasm. Its function is as follows. Required for maturation of 30S ribosomal subunits. This chain is Ribosome maturation factor RimP, found in Chromohalobacter salexigens (strain ATCC BAA-138 / DSM 3043 / CIP 106854 / NCIMB 13768 / 1H11).